Reading from the N-terminus, the 141-residue chain is Putative pre-16S rRNA nuclease (141 aa).

The protein belongs to the YqgF nuclease family.

It is found in the cytoplasm. Could be a nuclease involved in processing of the 5'-end of pre-16S rRNA. In Vibrio parahaemolyticus serotype O3:K6 (strain RIMD 2210633), this protein is Putative pre-16S rRNA nuclease.